Consider the following 107-residue polypeptide: Small ribosomal subunit protein uS10c (107 aa).

The protein belongs to the universal ribosomal protein uS10 family. In terms of assembly, part of the 30S ribosomal subunit.

It localises to the plastid. The protein localises to the chloroplast. Its function is as follows. Involved in the binding of tRNA to the ribosomes. This chain is Small ribosomal subunit protein uS10c, found in Thalassiosira pseudonana (Marine diatom).